The primary structure comprises 255 residues: Ribonuclease HII (255 aa).

Residues 72 to 255 (AIICGIDEVG…KSFEPIKSLL (184 aa)) form the RNase H type-2 domain. Residues Asp78, Glu79, and Asp170 each coordinate a divalent metal cation.

It belongs to the RNase HII family. Mn(2+) serves as cofactor. Requires Mg(2+) as cofactor.

The protein localises to the cytoplasm. The enzyme catalyses Endonucleolytic cleavage to 5'-phosphomonoester.. In terms of biological role, endonuclease that specifically degrades the RNA of RNA-DNA hybrids. This chain is Ribonuclease HII, found in Staphylococcus aureus (strain USA300).